The chain runs to 345 residues: uncharacterized protein (345 aa).

Disordered regions lie at residues 1–24 (MGLEGSEKLEHEIEQVHDNIENRK) and 296–345 (MTAH…LNES). Residues 304 to 323 (SDYDNDDDTDGIINETDYEL) show a composition bias toward acidic residues. Residues 324–345 (DTSQSEFATLTTSSNKSILNES) show a composition bias toward polar residues.

This is an uncharacterized protein from Schizosaccharomyces pombe (strain 972 / ATCC 24843) (Fission yeast).